A 163-amino-acid chain; its full sequence is Small ribosomal subunit protein eS10A (163 aa).

Residues 92-163 form a disordered region; it reads LTQTTRSNAV…GFGRASRYDN (72 aa). Gly residues predominate over residues 105–116; sequence GGPGGPGGGFGG.

Belongs to the eukaryotic ribosomal protein eS10 family.

The protein localises to the cytoplasm. The polypeptide is Small ribosomal subunit protein eS10A (RpS10a) (Drosophila melanogaster (Fruit fly)).